A 161-amino-acid polypeptide reads, in one-letter code: Ribosome maturation factor RimP (161 aa).

It belongs to the RimP family.

It is found in the cytoplasm. In terms of biological role, required for maturation of 30S ribosomal subunits. The polypeptide is Ribosome maturation factor RimP (Herminiimonas arsenicoxydans).